The following is a 316-amino-acid chain: Sideroflexin-4 (316 aa).

5 helical membrane-spanning segments follow: residues 83-103 (QVFL…HKGI), 141-161 (LLIL…QIIL), 174-194 (ICRS…NILV), 230-250 (ISRA…MALL), and 263-283 (IAPI…PVSF).

Belongs to the sideroflexin family.

The protein resides in the mitochondrion inner membrane. Its function is as follows. Mitochondrial amino-acid transporter. Does not act as a serine transporter: not able to mediate transport of serine into mitochondria. The protein is Sideroflexin-4 of Danio rerio (Zebrafish).